Reading from the N-terminus, the 66-residue chain is DNA-binding protein 7d (66 aa).

Residues K5 and K7 each carry the N6-methyllysine; partial modification.

Belongs to the 7 kDa DNA-binding/endoribonuclease P2 family. Monomer. Lys-5 was 70% monomethylated in form 7a, 25% in form 7b, and 20% in form 7d. Lys-7 was 50% monomethylated in form 7a, 40% in form 7b, and 50% in form 7d.

The protein resides in the cytoplasm. Functionally, can constrain negative DNA supercoils. May be involved in maintaining the integrity of the genome at high temperature. This is DNA-binding protein 7d from Sulfolobus acidocaldarius (strain ATCC 33909 / DSM 639 / JCM 8929 / NBRC 15157 / NCIMB 11770).